Reading from the N-terminus, the 511-residue chain is Maturase K (511 aa).

It belongs to the intron maturase 2 family. MatK subfamily.

It localises to the plastid. The protein localises to the chloroplast. Usually encoded in the trnK tRNA gene intron. Probably assists in splicing its own and other chloroplast group II introns. In Hordeum vulgare (Barley), this protein is Maturase K.